We begin with the raw amino-acid sequence, 73 residues long: Putative membrane protein insertion efficiency factor (73 aa).

It belongs to the UPF0161 family.

The protein localises to the cell inner membrane. In terms of biological role, could be involved in insertion of integral membrane proteins into the membrane. This Phocaeicola vulgatus (strain ATCC 8482 / DSM 1447 / JCM 5826 / CCUG 4940 / NBRC 14291 / NCTC 11154) (Bacteroides vulgatus) protein is Putative membrane protein insertion efficiency factor.